The sequence spans 894 residues: Alanine--tRNA ligase (894 aa).

His-569, His-573, Cys-683, and His-687 together coordinate Zn(2+).

Belongs to the class-II aminoacyl-tRNA synthetase family. It depends on Zn(2+) as a cofactor.

It is found in the cytoplasm. It catalyses the reaction tRNA(Ala) + L-alanine + ATP = L-alanyl-tRNA(Ala) + AMP + diphosphate. Its function is as follows. Catalyzes the attachment of alanine to tRNA(Ala) in a two-step reaction: alanine is first activated by ATP to form Ala-AMP and then transferred to the acceptor end of tRNA(Ala). Also edits incorrectly charged Ser-tRNA(Ala) and Gly-tRNA(Ala) via its editing domain. The sequence is that of Alanine--tRNA ligase from Chloroflexus aurantiacus (strain ATCC 29366 / DSM 635 / J-10-fl).